Here is a 386-residue protein sequence, read N- to C-terminus: Succinate--CoA ligase [ADP-forming] subunit beta (386 aa).

The ATP-grasp domain maps to 9–235 (KELFAKHDVP…REEEDPLESA (227 aa)). Residues Lys-44, 51–53 (GRG), Ala-93, and Glu-98 contribute to the ATP site. Asn-190 and Asp-204 together coordinate Mg(2+). Residues Asn-255 and 317-319 (GIT) contribute to the substrate site.

Belongs to the succinate/malate CoA ligase beta subunit family. Heterotetramer of two alpha and two beta subunits. The cofactor is Mg(2+).

It catalyses the reaction succinate + ATP + CoA = succinyl-CoA + ADP + phosphate. It carries out the reaction GTP + succinate + CoA = succinyl-CoA + GDP + phosphate. It participates in carbohydrate metabolism; tricarboxylic acid cycle; succinate from succinyl-CoA (ligase route): step 1/1. Its function is as follows. Succinyl-CoA synthetase functions in the citric acid cycle (TCA), coupling the hydrolysis of succinyl-CoA to the synthesis of either ATP or GTP and thus represents the only step of substrate-level phosphorylation in the TCA. The beta subunit provides nucleotide specificity of the enzyme and binds the substrate succinate, while the binding sites for coenzyme A and phosphate are found in the alpha subunit. This is Succinate--CoA ligase [ADP-forming] subunit beta from Nocardioides sp. (strain ATCC BAA-499 / JS614).